The sequence spans 196 residues: Carnitine operon protein CaiE (196 aa).

The segment at 173–196 (TQPLRQMEENRPRLQGTTDVTPKR) is disordered. The segment covering 187–196 (QGTTDVTPKR) has biased composition (polar residues).

The protein belongs to the transferase hexapeptide repeat family.

The protein operates within amine and polyamine metabolism; carnitine metabolism. Its function is as follows. Overproduction of CaiE stimulates the activity of CaiB and CaiD. In Escherichia coli O127:H6 (strain E2348/69 / EPEC), this protein is Carnitine operon protein CaiE.